The primary structure comprises 600 residues: Elongation factor 4 (600 aa).

The 183-residue stretch at 5–187 (SHIRNFSIVA…ALVNRLPCPE (183 aa)) folds into the tr-type G domain. Residues 17-22 (DHGKST) and 134-137 (NKID) each bind GTP.

This sequence belongs to the TRAFAC class translation factor GTPase superfamily. Classic translation factor GTPase family. LepA subfamily.

The protein localises to the cell inner membrane. It carries out the reaction GTP + H2O = GDP + phosphate + H(+). In terms of biological role, required for accurate and efficient protein synthesis under certain stress conditions. May act as a fidelity factor of the translation reaction, by catalyzing a one-codon backward translocation of tRNAs on improperly translocated ribosomes. Back-translocation proceeds from a post-translocation (POST) complex to a pre-translocation (PRE) complex, thus giving elongation factor G a second chance to translocate the tRNAs correctly. Binds to ribosomes in a GTP-dependent manner. The chain is Elongation factor 4 from Paramagnetospirillum magneticum (strain ATCC 700264 / AMB-1) (Magnetospirillum magneticum).